A 30-amino-acid polypeptide reads, in one-letter code: Natriuretic peptides A (30 aa).

Residues 1-3 (APR) constitute a propeptide that is removed on maturation. Cys-11 and Cys-27 are disulfide-bonded.

It belongs to the natriuretic peptide family. In terms of processing, cleaved upon secretion to produce the functional hormone.

It localises to the secreted. Its function is as follows. Hormone playing a key role in cardiovascular homeostasis through regulation of natriuresis, diuresis, and vasodilation. Has a cGMP-stimulating activity. In Pelophylax ridibundus (Marsh frog), this protein is Natriuretic peptides A.